Reading from the N-terminus, the 801-residue chain is Ent-copalyl diphosphate synthase, chloroplastic (801 aa).

Lysine 241 lines the substrate pocket. Aspartate 373 and aspartate 375 together coordinate Mg(2+). The DXDD motif signature appears at 373-376; that stretch reads DIDD. Residue lysine 459 coordinates substrate.

This sequence belongs to the terpene synthase family. It depends on Mg(2+) as a cofactor.

Its subcellular location is the plastid. The protein localises to the chloroplast. It catalyses the reaction (2E,6E,10E)-geranylgeranyl diphosphate = ent-copalyl diphosphate. It participates in plant hormone biosynthesis; gibberellin biosynthesis. Functionally, catalyzes the conversion of geranylgeranyl diphosphate to the gibberellin precursor ent-copalyl diphosphate. This chain is Ent-copalyl diphosphate synthase, chloroplastic, found in Pisum sativum (Garden pea).